Reading from the N-terminus, the 372-residue chain is Chaperone protein DnaJ (372 aa).

A J domain is found at 5–70; it reads SYYDILGVSK…KKRQAYDQFG (66 aa). A CR-type zinc finger spans residues 140–218; sequence GREYKIEIPR…CGGQGLQEKR (79 aa). C153, C156, C170, C173, C192, C195, C206, and C209 together coordinate Zn(2+). CXXCXGXG motif repeat units follow at residues 153–160, 170–177, 192–199, and 206–213; these read CVDCNGSG, CPDCGGSG, CPTCRGKG, and CRSCGGQG.

This sequence belongs to the DnaJ family. Homodimer. Zn(2+) serves as cofactor.

It is found in the cytoplasm. Participates actively in the response to hyperosmotic and heat shock by preventing the aggregation of stress-denatured proteins and by disaggregating proteins, also in an autonomous, DnaK-independent fashion. Unfolded proteins bind initially to DnaJ; upon interaction with the DnaJ-bound protein, DnaK hydrolyzes its bound ATP, resulting in the formation of a stable complex. GrpE releases ADP from DnaK; ATP binding to DnaK triggers the release of the substrate protein, thus completing the reaction cycle. Several rounds of ATP-dependent interactions between DnaJ, DnaK and GrpE are required for fully efficient folding. Also involved, together with DnaK and GrpE, in the DNA replication of plasmids through activation of initiation proteins. This is Chaperone protein DnaJ from Leptospira interrogans serogroup Icterohaemorrhagiae serovar copenhageni (strain Fiocruz L1-130).